The following is a 434-amino-acid chain: Glutamyl-tRNA reductase 2 (434 aa).

Residues 57 to 60 (TCNR), Ser-113, 118 to 120 (DFE), and Gln-124 contribute to the substrate site. Residue Cys-58 is the Nucleophile of the active site. NADP(+) is bound at residue 193 to 198 (GTGKIG).

It belongs to the glutamyl-tRNA reductase family. In terms of assembly, homodimer.

It catalyses the reaction (S)-4-amino-5-oxopentanoate + tRNA(Glu) + NADP(+) = L-glutamyl-tRNA(Glu) + NADPH + H(+). It functions in the pathway porphyrin-containing compound metabolism; protoporphyrin-IX biosynthesis; 5-aminolevulinate from L-glutamyl-tRNA(Glu): step 1/2. Functionally, catalyzes the NADPH-dependent reduction of glutamyl-tRNA(Glu) to glutamate 1-semialdehyde (GSA). This Flavobacterium johnsoniae (strain ATCC 17061 / DSM 2064 / JCM 8514 / BCRC 14874 / CCUG 350202 / NBRC 14942 / NCIMB 11054 / UW101) (Cytophaga johnsonae) protein is Glutamyl-tRNA reductase 2.